A 252-amino-acid polypeptide reads, in one-letter code: Acyltransferase PGAP2 (252 aa).

Residues 1–22 (MVPVGPERGANSLFSLRFTTFA) lie on the Cytoplasmic side of the membrane. A helical membrane pass occupies residues 23 to 43 (VGTVSLPLFAFLFCIVWSLLF). Over 44–77 (NFSETTATHCHVPNYLPSVSAAIGGETPQRYIWR) the chain is Lumenal. The helical transmembrane segment at 78–98 (LCIGLHSAPRFLVGVAYLHYY) threads the bilayer. Over 99-111 (QGTPCSSPAYPRL) the chain is Cytoplasmic. The chain crosses the membrane as a helical span at residues 112 to 132 (CHLNFLLNCCEIFFLILLTYV). Over 133–142 (SSSENYEVHK) the chain is Lumenal. Residues 143–163 (LGFMAFMLFSVGYMFVTCSLW) traverse the membrane as a helical segment. Residues 164–184 (RVARKGSGSLEERTSYAWKKR) are Cytoplasmic-facing. The helical transmembrane segment at 185–205 (LFGFYLLMFLSSILVYIWHNM) threads the bilayer. The Lumenal segment spans residues 206–208 (YCE). Residues 209–229 (AGVYTVFALLEYLVVLSNMGF) form a helical membrane-spanning segment. The Cytoplasmic portion of the chain corresponds to 230–252 (HMTAWWDFGNKELMICSPGDKRI).

The protein belongs to the PGAP2 family.

The protein localises to the golgi apparatus membrane. In terms of biological role, involved in the fatty acid remodeling steps of GPI-anchor maturation where the unsaturated acyl chain at sn-2 of inositol phosphate is replaced by a saturated stearoyl chain. May catalyze the second step of the fatty acid remodeling, by reacylating a lyso-GPI intermediate at sn-2 of inositol phosphate by a saturated chain. The fatty acid remodeling steps is critical for the integration of GPI-APs into lipid rafts. The sequence is that of Acyltransferase PGAP2 from Xenopus tropicalis (Western clawed frog).